The primary structure comprises 299 residues: Methionyl-tRNA formyltransferase (299 aa).

Residue 109 to 112 participates in (6S)-5,6,7,8-tetrahydrofolate binding; the sequence is SLLP.

Belongs to the Fmt family.

It carries out the reaction L-methionyl-tRNA(fMet) + (6R)-10-formyltetrahydrofolate = N-formyl-L-methionyl-tRNA(fMet) + (6S)-5,6,7,8-tetrahydrofolate + H(+). In terms of biological role, attaches a formyl group to the free amino group of methionyl-tRNA(fMet). The formyl group appears to play a dual role in the initiator identity of N-formylmethionyl-tRNA by promoting its recognition by IF2 and preventing the misappropriation of this tRNA by the elongation apparatus. The sequence is that of Methionyl-tRNA formyltransferase from Wolbachia pipientis subsp. Culex pipiens (strain wPip).